Consider the following 188-residue polypeptide: Gamma-glutamylcyclotransferase (188 aa).

19–22 provides a ligand contact to substrate; that stretch reads YFAY. The active-site Proton acceptor is the E98. A Phosphoserine modification is found at S173.

This sequence belongs to the gamma-glutamylcyclotransferase family. Homodimer.

It catalyses the reaction an alpha-(gamma-L-glutamyl)-L-amino acid = 5-oxo-L-proline + an L-alpha-amino acid. Its function is as follows. Catalyzes the formation of 5-oxoproline from gamma-glutamyl dipeptides and may play a significant role in glutathione homeostasis. Induces release of cytochrome c from mitochondria with resultant induction of apoptosis. This Bos taurus (Bovine) protein is Gamma-glutamylcyclotransferase (GGCT).